Reading from the N-terminus, the 1404-residue chain is DNA-directed RNA polymerase subunit beta' (1404 aa).

Cys-60, Cys-62, Cys-75, and Cys-78 together coordinate Zn(2+). Mg(2+) contacts are provided by Asp-449, Asp-451, and Asp-453. Positions 778, 852, 859, and 862 each coordinate Zn(2+). The disordered stretch occupies residues 1380–1404 (LDRPLEEEEEEEIPQAIAEESDAEE). The segment covering 1384–1404 (LEEEEEEEIPQAIAEESDAEE) has biased composition (acidic residues).

It belongs to the RNA polymerase beta' chain family. The RNAP catalytic core consists of 2 alpha, 1 beta, 1 beta' and 1 omega subunit. When a sigma factor is associated with the core the holoenzyme is formed, which can initiate transcription. The cofactor is Mg(2+). Requires Zn(2+) as cofactor.

The catalysed reaction is RNA(n) + a ribonucleoside 5'-triphosphate = RNA(n+1) + diphosphate. Its function is as follows. DNA-dependent RNA polymerase catalyzes the transcription of DNA into RNA using the four ribonucleoside triphosphates as substrates. The sequence is that of DNA-directed RNA polymerase subunit beta' from Leptospira interrogans serogroup Icterohaemorrhagiae serovar Lai (strain 56601).